The following is a 130-amino-acid chain: Small ribosomal subunit protein uS9 (130 aa).

This sequence belongs to the universal ribosomal protein uS9 family.

The chain is Small ribosomal subunit protein uS9 from Cupriavidus pinatubonensis (strain JMP 134 / LMG 1197) (Cupriavidus necator (strain JMP 134)).